Reading from the N-terminus, the 216-residue chain is Pyridoxine/pyridoxamine 5'-phosphate oxidase (216 aa).

Residues 63–68 (RMVLMK), 78–79 (YS), K85, and Q107 contribute to the FMN site. K68 contributes to the substrate binding site. The substrate site is built by Y125 and R129. FMN is bound by residues 142–143 (QS) and W187. Position 193–195 (193–195 (RLH)) interacts with substrate. R197 provides a ligand contact to FMN.

The protein belongs to the pyridoxamine 5'-phosphate oxidase family. In terms of assembly, homodimer. FMN is required as a cofactor.

It catalyses the reaction pyridoxamine 5'-phosphate + O2 + H2O = pyridoxal 5'-phosphate + H2O2 + NH4(+). The enzyme catalyses pyridoxine 5'-phosphate + O2 = pyridoxal 5'-phosphate + H2O2. The protein operates within cofactor metabolism; pyridoxal 5'-phosphate salvage; pyridoxal 5'-phosphate from pyridoxamine 5'-phosphate: step 1/1. It functions in the pathway cofactor metabolism; pyridoxal 5'-phosphate salvage; pyridoxal 5'-phosphate from pyridoxine 5'-phosphate: step 1/1. Catalyzes the oxidation of either pyridoxine 5'-phosphate (PNP) or pyridoxamine 5'-phosphate (PMP) into pyridoxal 5'-phosphate (PLP). This Bradyrhizobium sp. (strain ORS 278) protein is Pyridoxine/pyridoxamine 5'-phosphate oxidase.